A 462-amino-acid polypeptide reads, in one-letter code: L-seryl-tRNA(Sec) selenium transferase (462 aa).

At Lys-294 the chain carries N6-(pyridoxal phosphate)lysine.

It belongs to the SelA family. In terms of assembly, homodecamer; pentamer of dimers. Binds only one seryl-tRNA(Sec) per dimer. Pyridoxal 5'-phosphate is required as a cofactor.

It is found in the cytoplasm. It carries out the reaction L-seryl-tRNA(Sec) + selenophosphate + H(+) = L-selenocysteinyl-tRNA(Sec) + phosphate. It participates in aminoacyl-tRNA biosynthesis; selenocysteinyl-tRNA(Sec) biosynthesis; selenocysteinyl-tRNA(Sec) from L-seryl-tRNA(Sec) (bacterial route): step 1/1. Its function is as follows. Converts seryl-tRNA(Sec) to selenocysteinyl-tRNA(Sec) required for selenoprotein biosynthesis. The sequence is that of L-seryl-tRNA(Sec) selenium transferase from Yersinia pseudotuberculosis serotype O:1b (strain IP 31758).